The primary structure comprises 963 residues: Putative RNA Helicase B962L (963 aa).

In terms of domain architecture, Helicase ATP-binding spans 43 to 229; that stretch reads IPTSLADRVL…FGIGKENIIL (187 aa). 56-63 serves as a coordination point for ATP; the sequence is SRTGSGKS. The DEAH box signature appears at 167–170; that stretch reads DEAH. In terms of domain architecture, Helicase C-terminal spans 253–459; sequence ACETALTIHK…TIKKNKEGVF (207 aa). Residues 521-541 traverse the membrane as a helical segment; that stretch reads GYFWQAAISDIAIILAVVSVV.

The protein belongs to the DEAD box helicase family. DEAH subfamily.

It is found in the host membrane. Its subcellular location is the virion. It catalyses the reaction ATP + H2O = ADP + phosphate + H(+). The protein is Putative RNA Helicase B962L of African swine fever virus (isolate Tick/Malawi/Lil 20-1/1983) (ASFV).